The chain runs to 233 residues: tRNA (guanine-N(1)-)-methyltransferase (233 aa).

S-adenosyl-L-methionine is bound by residues Gly-113 and 133–138; that span reads IGDYVL.

The protein belongs to the RNA methyltransferase TrmD family. In terms of assembly, homodimer.

It localises to the cytoplasm. It carries out the reaction guanosine(37) in tRNA + S-adenosyl-L-methionine = N(1)-methylguanosine(37) in tRNA + S-adenosyl-L-homocysteine + H(+). Specifically methylates guanosine-37 in various tRNAs. This Ruminiclostridium cellulolyticum (strain ATCC 35319 / DSM 5812 / JCM 6584 / H10) (Clostridium cellulolyticum) protein is tRNA (guanine-N(1)-)-methyltransferase.